The following is a 595-amino-acid chain: Pectinesterase 5 (595 aa).

A signal peptide spans 1–24 (MIGKVVVSVASILLIVGVAIGVVA). 2 N-linked (GlcNAc...) asparagine glycosylation sites follow: N86 and N206. The segment at 215–239 (SDKGAAPVNKGTPPVADDSPVADPD) is disordered. The span at 227 to 239 (PPVADDSPVADPD) shows a compositional bias: low complexity. The short motif at 243–246 (RRLL) is the RRLL cleavage motif element. Residues 263–266 (RKLM) carry the RKLM cleavage motif motif. N-linked (GlcNAc...) asparagine glycosylation is present at N349. Substrate contacts are provided by T360 and Q390. D413 functions as the Proton donor in the catalytic mechanism. Residue D434 is the Nucleophile of the active site. Positions 503 and 505 each coordinate substrate.

This sequence in the N-terminal section; belongs to the PMEI family. It in the C-terminal section; belongs to the pectinesterase family. In terms of assembly, interacts with SBT6.1. Expressed in pollen grains and pollen tubes.

It localises to the cell membrane. The protein resides in the secreted. The protein localises to the cell wall. It is found in the golgi apparatus membrane. The enzyme catalyses [(1-&gt;4)-alpha-D-galacturonosyl methyl ester](n) + n H2O = [(1-&gt;4)-alpha-D-galacturonosyl](n) + n methanol + n H(+). It functions in the pathway glycan metabolism; pectin degradation; 2-dehydro-3-deoxy-D-gluconate from pectin: step 1/5. Acts in the modification of cell walls via demethylesterification of cell wall pectin. Plays an important role in growth of pollen tubes in female floral tissues, possibly via enhancing the interaction between the pollen tube and female floral tissues by modification of the cell walls. May be regulated by MYB80 during anther development and play a role in tapetum and pollen development. This Arabidopsis thaliana (Mouse-ear cress) protein is Pectinesterase 5 (PME5).